Here is a 136-residue protein sequence, read N- to C-terminus: Large ribosomal subunit protein uL16 (136 aa).

It belongs to the universal ribosomal protein uL16 family. In terms of assembly, part of the 50S ribosomal subunit.

Binds 23S rRNA and is also seen to make contacts with the A and possibly P site tRNAs. The chain is Large ribosomal subunit protein uL16 from Ehrlichia canis (strain Jake).